A 600-amino-acid chain; its full sequence is MRVLLVLVACLTYFSGGALAQSCSSYSGDNCPSTCFQGSYDIPCGAQVKYCTEMKDNCGEGGDVKCWKDGSNLPVQTWSSCVPSELFGPNGKFKPSEIPNSSNCPTNCENGVEWVNLCGLSCDAKTACCPDVCQCKGGQTSGGSTTGSQTSGGSTSGGSTTGSQTSGGSTTGSQTSGSQTSGGSCSNTQCPNGFYCQVQGNNAVCVPQQSSTSGGHQNDPCDTVQCPYGYSCESRDGFEAKCTRDEDEPTHRPTHRPKPPHDSDKYLCDNVHCPRGYKCNAKNGVAKCIAGYEIPRVCRNIQCPTGYRCEDHNRNPICVLEERENPDNCLTCNDVNCEASGLVCVMTRARCKVGAAKCCDVQPTCIKPSTIAGSTIASIASTIASTGSTGATSPCSVAQCPTGYVCVAQNNVAVCLPRPTTTTGSTSDSSALGSTSESSASGSSAVSSSASGSSAASSSPSSSAASSSPSSSAASSSPSSSAASSSPSSSASSSSSPSSSASSSSAPSSSASSSSAPSSSASSSSASSSSASSAATTAATTIATTAATTTATTTATTATTTATTTATTTAATIATTTAATTTATTTATTATTTATTTATS.

The DSCP-N domain occupies 21–140; that stretch reads QSCSSYSGDN…DVCQCKGGQT (120 aa). A disordered region spans residues 139 to 178; that stretch reads QTSGGSTTGSQTSGGSTSGGSTTGSQTSGGSTTGSQTSGS. Residues 161–178 are compositionally biased toward low complexity; that stretch reads TGSQTSGGSTTGSQTSGS. 6 consecutive Follistatin-like domains span residues 184 to 206, 220 to 243, 267 to 289, 297 to 319, 331 to 359, and 394 to 416; these read SCSN…AVCV, PCDT…AKCT, LCDN…AKCI, VCRN…PICV, TCND…AKCC, and PCSV…AVCL. The interval 420–530 is disordered; sequence TTTTGSTSDS…ASSSSASSSS (111 aa).

Post-translationally, glycosylated; may contain fucose and GlcNAc-alpha-1-P-Ser.

It is found in the spore wall. In Dictyostelium discoideum (Social amoeba), this protein is Spore coat protein SP96 (cotA).